The sequence spans 204 residues: Somatotropin (204 aa).

A signal peptide spans 1 to 17; the sequence is MDRVVLMLSVLSLGVSS. Position 18 is a pyrrolidone carboxylic acid (Gln-18). A Zn(2+)-binding site is contributed by His-36. Cys-69 and Cys-177 are oxidised to a cystine. Glu-186 is a binding site for Zn(2+). The cysteines at positions 194 and 202 are disulfide-linked.

The protein belongs to the somatotropin/prolactin family.

It is found in the secreted. Growth hormone plays an important role in growth control and is involved in the regulation of several anabolic processes. Implicated as an osmoregulatory substance important for seawater adaptation. This Acanthopagrus butcheri (Australian black bream) protein is Somatotropin (gh).